Reading from the N-terminus, the 197-residue chain is Holliday junction branch migration complex subunit RuvA (197 aa).

Residues 1–63 (MIEFIRGYVD…EDVLALYGFH (63 aa)) form a domain I region. The domain II stretch occupies residues 64 to 142 (TRQERMLFAK…AIVPDAFPNL (79 aa)). Residues 143 to 149 (FTEPLEE) are flexible linker. Positions 149–197 (ETNALSEAIEALKALGYADKEIQKVVPMLRQERLSTEGYIKLALQKLLK) are domain III.

It belongs to the RuvA family. In terms of assembly, homotetramer. Forms an RuvA(8)-RuvB(12)-Holliday junction (HJ) complex. HJ DNA is sandwiched between 2 RuvA tetramers; dsDNA enters through RuvA and exits via RuvB. An RuvB hexamer assembles on each DNA strand where it exits the tetramer. Each RuvB hexamer is contacted by two RuvA subunits (via domain III) on 2 adjacent RuvB subunits; this complex drives branch migration. In the full resolvosome a probable DNA-RuvA(4)-RuvB(12)-RuvC(2) complex forms which resolves the HJ.

It localises to the cytoplasm. In terms of biological role, the RuvA-RuvB-RuvC complex processes Holliday junction (HJ) DNA during genetic recombination and DNA repair, while the RuvA-RuvB complex plays an important role in the rescue of blocked DNA replication forks via replication fork reversal (RFR). RuvA specifically binds to HJ cruciform DNA, conferring on it an open structure. The RuvB hexamer acts as an ATP-dependent pump, pulling dsDNA into and through the RuvAB complex. HJ branch migration allows RuvC to scan DNA until it finds its consensus sequence, where it cleaves and resolves the cruciform DNA. The sequence is that of Holliday junction branch migration complex subunit RuvA from Anoxybacillus flavithermus (strain DSM 21510 / WK1).